A 155-amino-acid chain; its full sequence is Ribonuclease H (155 aa).

Positions 1-142 (MLKQVEIFTD…CDELARAAAM (142 aa)) constitute an RNase H type-1 domain. Residues Asp-10, Glu-48, Asp-70, and Asp-134 each contribute to the Mg(2+) site.

It belongs to the RNase H family. Monomer. The cofactor is Mg(2+).

It localises to the cytoplasm. It catalyses the reaction Endonucleolytic cleavage to 5'-phosphomonoester.. Its function is as follows. Endonuclease that specifically degrades the RNA of RNA-DNA hybrids. In Salmonella paratyphi A (strain AKU_12601), this protein is Ribonuclease H.